The chain runs to 428 residues: Large envelope protein (428 aa).

A lipid anchor (N-myristoyl glycine; by host) is attached at glycine 2. Positions 2–145 (GNNIKVTFDP…PPLRDTHPHL (144 aa)) are pre-S1. Residues 2–204 (GNNIKVTFDP…PLTIGDPVLS (203 aa)) form a pre-S region. Topologically, residues 2–211 (GNNIKVTFDP…VLSTEMSPSG (210 aa)) are virion surface; in external conformation. Topologically, residues 2–283 (GNNIKVTFDP…NGFRWMYLRR (282 aa)) are intravirion; in internal conformation. Asparagine 3 carries an N-linked (GlcNAc...) asparagine glycan. Positions 110–144 (RDIPRGIVPPQTPSNRDQRRKPTPLTPPLRDTHPH) are disordered. Residues 146 to 204 (TMKNQTGHLQGFAEGLRALTTSDHHNSAYGDPFTTLSPVVPTVSTTLSPPLTIGDPVLS) form a pre-S2 region. Residues 212–232 (LLGLLAGLQVVYFLWTKILTI) form a helical membrane-spanning segment. Residues 233–283 (AQSLDWWWTSLSFPGGIPECTGQNLQFQTCKHLPTSCPPTCNGFRWMYLRR) lie on the Intravirion; in external conformation side of the membrane. A helical transmembrane segment spans residues 284-304 (FIIYLLVLLLFLTFLLVLLDW). At 305-376 (KGLLPVCPMM…WALARFSWLS (72 aa)) the chain is on the virion surface side. An N-linked (GlcNAc...) asparagine; by host glycan is attached at asparagine 348. A helical transmembrane segment spans residues 377–397 (LLVPLLQWLGGISLTVWLLLI). Residues 398 to 403 (WMIWFW) are Intravirion-facing. Residues 404 to 426 (GPVLMSILPPFIPIFALFFLIWA) traverse the membrane as a helical segment. The Virion surface segment spans residues 427–428 (YI).

The protein belongs to the orthohepadnavirus major surface antigen family. In its internal form (Li-HBsAg), interacts with the capsid protein and with the isoform S. Interacts with host chaperone CANX. In terms of assembly, associates with host chaperone CANX through its pre-S2 N glycan; this association may be essential for isoform M proper secretion. As to quaternary structure, interacts with isoform L. Interacts with the antigens of satellite virus HDV (HDVAgs); this interaction is required for encapsidation of HDV genomic RNA. Post-translationally, isoform M is N-terminally acetylated by host at a ratio of 90%, and N-glycosylated by host at the pre-S2 region. In terms of processing, myristoylated.

The protein localises to the virion membrane. Its function is as follows. The large envelope protein exists in two topological conformations, one which is termed 'external' or Le-HBsAg and the other 'internal' or Li-HBsAg. In its external conformation the protein attaches the virus to cell receptors and thereby initiating infection. This interaction determines the species specificity and liver tropism. This attachment induces virion internalization predominantly through caveolin-mediated endocytosis. The large envelope protein also assures fusion between virion membrane and endosomal membrane. In its internal conformation the protein plays a role in virion morphogenesis and mediates the contact with the nucleocapsid like a matrix protein. In terms of biological role, the middle envelope protein plays an important role in the budding of the virion. It is involved in the induction of budding in a nucleocapsid independent way. In this process the majority of envelope proteins bud to form subviral lipoprotein particles of 22 nm of diameter that do not contain a nucleocapsid. The polypeptide is Large envelope protein (Ground squirrel hepatitis virus (strain 27) (GSHV)).